A 581-amino-acid polypeptide reads, in one-letter code: ATP-dependent lipid A-core flippase (581 aa).

The next 6 helical transmembrane spans lie at 21–41, 65–85, 138–158, 161–181, 246–266, and 271–291; these read TVAIVAIIGMIGYSGMDALFI, FVVIALVIGRGVFNFMSSYCL, ALLIVVREGAFVVFLLAVMFY, WQLSLIFLVIIPLVAVIVTVV, LSVSIIQVLAASAMAVILWVV, and MIDTISSGDFVVLISSMMMLL. Residues 24-306 enclose the ABC transmembrane type-1 domain; sequence IVAIIGMIGY…LANVNSDMQR (283 aa). Residues 338–575 form the ABC transporter domain; that stretch reads IEVKNVTFKY…NGTYSALCKM (238 aa). Residue 372 to 379 participates in ATP binding; sequence GRSGSGKS.

The protein belongs to the ABC transporter superfamily. Lipid exporter (TC 3.A.1.106) family. As to quaternary structure, homodimer.

The protein localises to the cell inner membrane. The catalysed reaction is ATP + H2O + lipid A-core oligosaccharideSide 1 = ADP + phosphate + lipid A-core oligosaccharideSide 2.. Involved in lipopolysaccharide (LPS) biosynthesis. Translocates lipid A-core from the inner to the outer leaflet of the inner membrane. Transmembrane domains (TMD) form a pore in the inner membrane and the ATP-binding domain (NBD) is responsible for energy generation. The protein is ATP-dependent lipid A-core flippase of Pseudoalteromonas translucida (strain TAC 125).